A 249-amino-acid chain; its full sequence is 5'-nucleotidase SurE (249 aa).

A divalent metal cation contacts are provided by D8, D9, S39, and N91.

The protein belongs to the SurE nucleotidase family. The cofactor is a divalent metal cation.

It is found in the cytoplasm. The enzyme catalyses a ribonucleoside 5'-phosphate + H2O = a ribonucleoside + phosphate. Nucleotidase that shows phosphatase activity on nucleoside 5'-monophosphates. The chain is 5'-nucleotidase SurE from Magnetococcus marinus (strain ATCC BAA-1437 / JCM 17883 / MC-1).